The sequence spans 140 residues: Mitochondrial import receptor subunit TOM22 homolog (140 aa).

Positions 1–11 (MAAAAAGPGAP) are enriched in low complexity. The segment at 1 to 40 (MAAAAAGPGAPLSADELLPKGDAEKPEEELEEEDDEELDE) is disordered. The Cytoplasmic portion of the chain corresponds to 1 to 81 (MAAAAAGPGA…AQKMYRFSRA (81 aa)). Ser-13 is modified (phosphoserine). Acidic residues predominate over residues 25 to 40 (KPEEELEEEDDEELDE). The tract at residues 39–48 (DETLSERLWG) is import sequence; necessary for mitochondrion outer membrane localization and integration in the TOM complex. The residue at position 41 (Thr-41) is a Phosphothreonine. Ser-43 is subject to Phosphoserine. The segment at 81-101 (AALWIGTTSFMILVLPVVFET) is TMD; necessary for mitochondrion outer membrane localization and integration in the TOM complex. A helical transmembrane segment spans residues 82–101 (ALWIGTTSFMILVLPVVFET). Residues 102–140 (EKLQMEQQQQLQQRQILLGPNTGLSGGMPGALPSLPGKI) lie on the Mitochondrial intermembrane side of the membrane. The segment at 121 to 140 (PNTGLSGGMPGALPSLPGKI) is C-tail signal; necessary for mitochondrion outer membrane localization and integration in the TOM complex.

This sequence belongs to the Tom22 family. In terms of assembly, forms part of the preprotein translocase complex of the outer mitochondrial membrane (TOM complex) which consists of at least 7 different proteins (TOMM5, TOMM6, TOMM7, TOMM20, TOMM22, TOMM40 and TOMM70). Interacts with PPP2R2B and TOMM40.

It is found in the mitochondrion outer membrane. Its function is as follows. Central receptor component of the translocase of the outer membrane of mitochondria (TOM complex) responsible for the recognition and translocation of cytosolically synthesized mitochondrial preproteins. Together with the peripheral receptor TOM20 functions as the transit peptide receptor and facilitates the movement of preproteins into the translocation pore. Required for the translocation across the mitochondrial outer membrane of cytochrome P450 monooxygenases. In Bos taurus (Bovine), this protein is Mitochondrial import receptor subunit TOM22 homolog (TOMM22).